A 267-amino-acid polypeptide reads, in one-letter code: Ribosomal RNA large subunit methyltransferase E (267 aa).

5 residues coordinate S-adenosyl-L-methionine: G50, W52, D68, D84, and D109. K149 (proton acceptor) is an active-site residue. A TRAM domain is found at 196 to 255 (PLKIDDKFDVTIKKIGAKGNGIAFVEDFVVFMQDEVKKGENVRIKIVDVKPEFAFAIVIG).

This sequence belongs to the class I-like SAM-binding methyltransferase superfamily. RNA methyltransferase RlmE family.

It localises to the cytoplasm. The catalysed reaction is uridine(2552) in 23S rRNA + S-adenosyl-L-methionine = 2'-O-methyluridine(2552) in 23S rRNA + S-adenosyl-L-homocysteine + H(+). In terms of biological role, specifically methylates the uridine in position 2552 of 23S rRNA at the 2'-O position of the ribose in the fully assembled 50S ribosomal subunit. In Methanococcoides burtonii (strain DSM 6242 / NBRC 107633 / OCM 468 / ACE-M), this protein is Ribosomal RNA large subunit methyltransferase E.